Here is a 1357-residue protein sequence, read N- to C-terminus: DNA-directed RNA polymerase subunit beta (1357 aa).

Belongs to the RNA polymerase beta chain family. In terms of assembly, the RNAP catalytic core consists of 2 alpha, 1 beta, 1 beta' and 1 omega subunit. When a sigma factor is associated with the core the holoenzyme is formed, which can initiate transcription.

It carries out the reaction RNA(n) + a ribonucleoside 5'-triphosphate = RNA(n+1) + diphosphate. In terms of biological role, DNA-dependent RNA polymerase catalyzes the transcription of DNA into RNA using the four ribonucleoside triphosphates as substrates. The polypeptide is DNA-directed RNA polymerase subunit beta (Pseudomonas fluorescens (strain Pf0-1)).